A 120-amino-acid polypeptide reads, in one-letter code: Large ribosomal subunit protein uL18 (120 aa).

Positions 1–26 (MSKAKVTNARRKRSVRLKLRRSGGGR) are disordered. Over residues 8–23 (NARRKRSVRLKLRRSG) the composition is skewed to basic residues.

This sequence belongs to the universal ribosomal protein uL18 family. Part of the 50S ribosomal subunit; part of the 5S rRNA/L5/L18/L25 subcomplex. Contacts the 5S and 23S rRNAs.

In terms of biological role, this is one of the proteins that bind and probably mediate the attachment of the 5S RNA into the large ribosomal subunit, where it forms part of the central protuberance. The sequence is that of Large ribosomal subunit protein uL18 from Bradyrhizobium diazoefficiens (strain JCM 10833 / BCRC 13528 / IAM 13628 / NBRC 14792 / USDA 110).